A 46-amino-acid chain; its full sequence is Putative antitoxin VapB3 (46 aa).

The protein belongs to the UPF0165 family.

Functionally, possibly the antitoxin component of a type II toxin-antitoxin (TA) system. Its cognate toxin is VapC3 (Potential). This chain is Putative antitoxin VapB3 (vapB3), found in Pyrococcus furiosus (strain ATCC 43587 / DSM 3638 / JCM 8422 / Vc1).